Reading from the N-terminus, the 978-residue chain is Mineralocorticoid receptor (978 aa).

A modulating region spans residues 1-602 (METKGYHSLP…STGSSRPSKI (602 aa)). The segment covering 234-243 (SLTCSPSVEN) has biased composition (polar residues). Disordered regions lie at residues 234 to 331 (SLTC…STVG) and 353 to 372 (GAIQ…AHDV). A phosphoserine mark is found at Ser250, Ser259, Ser283, Ser287, and Ser299. Residues 259–300 (SPLSSPLSSMKSPISSPPSHCSVKSPVSSPNNVPLRSSVSSP) are compositionally biased toward low complexity. Over residues 301–331 (ANLNNSRCSVSSPSNTNNRSTLSSPTASTVG) the composition is skewed to polar residues. Cys603, Cys606, Cys620, Cys623, Cys637, Cys643, Cys653, and Cys656 together coordinate Zn(2+). 2 consecutive NR C4-type zinc fingers follow at residues 603–623 (CLVC…CGSC) and 637–661 (CAGR…LQKC). Positions 603–666 (CLVCGDEASG…RLQKCLQAGM (64 aa)) form a DNA-binding region, nuclear receptor. Residues 667 to 719 (NLGARKSKKLGKLKGLHEEQPQQPPPPPPQSPEEGTTYIAPTKEPSVNSALVP) are hinge. Residues 681 to 706 (GLHEEQPQQPPPPPPQSPEEGTTYIA) form a disordered region. Residues 688-697 (QQPPPPPPQS) show a composition bias toward pro residues. The NR LBD domain maps to 720-958 (QLASITRALT…EFPAMLVEII (239 aa)). 21-hydroxyprogesterone contacts are provided by Asn764 and Gln770. Residues Asn764 and Gln770 each contribute to the aldosterone site. The progesterone site is built by Asn764 and Gln770. Residues 776–779 (KWAK) form an important for coactivator binding region. 21-hydroxyprogesterone contacts are provided by Arg811 and Thr939. Arg811 and Thr939 together coordinate aldosterone. Residues Arg811 and Thr939 each coordinate progesterone.

This sequence belongs to the nuclear hormone receptor family. NR3 subfamily. As to quaternary structure, heteromultimeric cytoplasmic complex with HSP90, HSP70, and FKBP4, in the absence of ligand. After ligand binding, it translocates to the nucleus and binds to DNA as a homodimer and as a heterodimer with NR3C1. Binds the coactivator NCOA2. May interact with HSD11B2 in the absence of ligand. Binds the coactivators NCOA1, TIF1 and NRIP1. In terms of processing, phosphorylated. As to expression, expressed in heart and kidney.

The protein localises to the cytoplasm. It localises to the nucleus. The protein resides in the endoplasmic reticulum membrane. Its function is as follows. Receptor for both mineralocorticoids (MC) such as aldosterone and glucocorticoids (GC) such as corticosterone or cortisol. Binds to mineralocorticoid response elements (MRE) and transactivates target genes. The effect of MC is to increase ion and water transport and thus raise extracellular fluid volume and blood pressure and lower potassium levels. The polypeptide is Mineralocorticoid receptor (Nr3c2) (Mus musculus (Mouse)).